Consider the following 263-residue polypeptide: NADH dehydrogenase [ubiquinone] iron-sulfur protein 3, mitochondrial (263 aa).

Residues 1–35 (MVAAVARLWWRGLLGASALTRGAGRPSVLLLPVRR) constitute a mitochondrion transit peptide.

Belongs to the complex I 30 kDa subunit family. Core subunit of respiratory chain NADH dehydrogenase (Complex I) which is composed of 45 different subunits. Interacts with NDUFAF3. Interacts with RAB5IF. Found in subcomplexes containing subunits NDUFS2, MT-ND1 and NDUFA13.

The protein localises to the mitochondrion inner membrane. The catalysed reaction is a ubiquinone + NADH + 5 H(+)(in) = a ubiquinol + NAD(+) + 4 H(+)(out). Functionally, core subunit of the mitochondrial membrane respiratory chain NADH dehydrogenase (Complex I) which catalyzes electron transfer from NADH through the respiratory chain, using ubiquinone as an electron acceptor. Essential for the catalytic activity and assembly of complex I. This chain is NADH dehydrogenase [ubiquinone] iron-sulfur protein 3, mitochondrial (NDUFS3), found in Pongo pygmaeus (Bornean orangutan).